Consider the following 117-residue polypeptide: Large ribosomal subunit protein bL20 (117 aa).

Belongs to the bacterial ribosomal protein bL20 family.

Binds directly to 23S ribosomal RNA and is necessary for the in vitro assembly process of the 50S ribosomal subunit. It is not involved in the protein synthesizing functions of that subunit. In Rickettsia felis (strain ATCC VR-1525 / URRWXCal2) (Rickettsia azadi), this protein is Large ribosomal subunit protein bL20.